Reading from the N-terminus, the 333-residue chain is Transcription factor HHO6 (333 aa).

The 61-residue stretch at 189 to 249 (ALRKQRRCWN…HLQKYRLHIR (61 aa)) folds into the HTH myb-type domain. A DNA-binding region (H-T-H motif) is located at residues 220-245 (PKQIREHMQEEGLTNDEVKSHLQKYR). The tract at residues 274–333 (DEEETCEGGESLKRSNAQSDSPQGPLQLPSTTTTTGGDSSMEDVEDAKSESFQLERLRSP) is disordered. Polar residues predominate over residues 287 to 303 (RSNAQSDSPQGPLQLPS). Residues 319 to 333 (DAKSESFQLERLRSP) show a composition bias toward basic and acidic residues.

The protein resides in the nucleus. Its function is as follows. Probable transcription factor involved in phosphate signaling in roots. The chain is Transcription factor HHO6 from Arabidopsis thaliana (Mouse-ear cress).